A 92-amino-acid polypeptide reads, in one-letter code: UPF0250 protein XAC0666 (92 aa).

It belongs to the UPF0250 family.

The sequence is that of UPF0250 protein XAC0666 from Xanthomonas axonopodis pv. citri (strain 306).